A 350-amino-acid polypeptide reads, in one-letter code: MEHHIRYDAAQRALILLDQRLLPTRQEDFVCRTTEDIVTALQVMVVRGAPAIGVTAAWGCVLAAYEAAEAGDHWHPVLDGLLERIAKARPTAVNLRWAVDRMRKVWKTAGHAPFATLISLWESEARRIHRDDIEINRAMGRHGAALIDEGDTVMTHCNAGALATAGYGTALGVIRGAVDAGKKISVIANETRPFLQGARLTAYELHEDHIPVTVACDNACGHLMRKGMVQKVVVGADRIAANGDAANKIGTYSVALLAREHGVPFYVAAPLSTIDRNTPDGDHIPIEDRTPREVTHVGDTQITPDGVPVYNFAFDVTPAALIAGIVTEVGVLRPPYTESIAEAFRKAGLE.

Substrate contacts are provided by residues 47-49 (RGA), Arg89, and Gln196. Catalysis depends on Asp237, which acts as the Proton donor. 247–248 (NK) contributes to the substrate binding site.

The protein belongs to the eIF-2B alpha/beta/delta subunits family. MtnA subfamily.

The catalysed reaction is 5-(methylsulfanyl)-alpha-D-ribose 1-phosphate = 5-(methylsulfanyl)-D-ribulose 1-phosphate. It participates in amino-acid biosynthesis; L-methionine biosynthesis via salvage pathway; L-methionine from S-methyl-5-thio-alpha-D-ribose 1-phosphate: step 1/6. Catalyzes the interconversion of methylthioribose-1-phosphate (MTR-1-P) into methylthioribulose-1-phosphate (MTRu-1-P). The sequence is that of Methylthioribose-1-phosphate isomerase from Nitratidesulfovibrio vulgaris (strain DSM 19637 / Miyazaki F) (Desulfovibrio vulgaris).